The following is a 246-amino-acid chain: 2,3-bisphosphoglycerate-dependent phosphoglycerate mutase (246 aa).

Substrate is bound by residues 9–16, 22–23, R61, 88–91, K99, 115–116, and 181–182; these read RHGQSAWN, TG, ERHY, RR, and GN. H10 serves as the catalytic Tele-phosphohistidine intermediate. The Proton donor/acceptor role is filled by E88.

This sequence belongs to the phosphoglycerate mutase family. BPG-dependent PGAM subfamily.

It catalyses the reaction (2R)-2-phosphoglycerate = (2R)-3-phosphoglycerate. It participates in carbohydrate degradation; glycolysis; pyruvate from D-glyceraldehyde 3-phosphate: step 3/5. Functionally, catalyzes the interconversion of 2-phosphoglycerate and 3-phosphoglycerate. In Bifidobacterium longum (strain DJO10A), this protein is 2,3-bisphosphoglycerate-dependent phosphoglycerate mutase.